The sequence spans 558 residues: Armadillo repeat-containing X-linked protein 5 (558 aa).

2 stretches are compositionally biased toward basic and acidic residues: residues 1 to 14 and 139 to 156; these read MVDS…RGKA and KSHD…REEA. 2 disordered regions span residues 1–34 and 139–163; these read MVDS…NGKT and KSHD…MKSS. 4 ARM repeats span residues 300–339, 422–461, 463–503, and 520–558; these read CKSR…GISP, VKFE…CLSK, HANT…NINF, and SELI…ILKL.

This sequence belongs to the eutherian X-chromosome-specific Armcx family.

The protein is Armadillo repeat-containing X-linked protein 5 (ARMCX5) of Pongo abelii (Sumatran orangutan).